The sequence spans 164 residues: Neurotrophin-3 (164 aa).

Positions 1 to 3 are cleaved as a signal peptide; it reads IQS. Residues 4-118 constitute a propeptide that is removed on maturation; it reads TSMDQGBLSE…GLNRTSRRKR (115 aa). Residues 89 to 126 are disordered; sequence LLSENTPLEPPPLYLTEEPMGLNRTSRRKRFAEGKSHR. Asparagine 111 is a glycosylation site (N-linked (GlcNAc...) asparagine).

Belongs to the NGF-beta family.

The protein resides in the secreted. Functionally, seems to promote the survival of visceral and proprioceptive sensory neurons. This chain is Neurotrophin-3 (NTF3), found in Cylindrophis ruffus (Red-tailed pipe snake).